Consider the following 703-residue polypeptide: DnaJ homolog subfamily C member 14 (703 aa).

Disordered regions lie at residues methionine 1–serine 150 and glutamate 164–serine 229. The segment covering serine 17–serine 28 has biased composition (low complexity). Pro residues predominate over residues histidine 75–proline 84. Acidic residues-rich tracts occupy residues tyrosine 89–valine 102 and glutamate 164–glutamate 176. Over residues proline 193–phenylalanine 202 the composition is skewed to basic residues. Residues leucine 203–alanine 218 show a composition bias toward basic and acidic residues. Basic residues predominate over residues proline 219 to arginine 228. Helical transmembrane passes span tryptophan 254–isoleucine 274, valine 305–leucine 325, and valine 327–tryptophan 347. One can recognise a J domain in the interval asparagine 444–arginine 508. Disordered regions lie at residues phenylalanine 622–aspartate 643 and methionine 659–arginine 703. A compositionally biased stretch (polar residues) spans glycine 673–valine 684. The segment covering proline 691–arginine 703 has biased composition (basic residues).

Interacts with the FxxxFxxxF motif of DRD1 via its C-terminal domain. Detected in heart, brain, lung, liver, skeletal muscle, kidney and testis.

The protein localises to the endoplasmic reticulum membrane. Regulates the export of target proteins, such as DRD1, from the endoplasmic reticulum to the cell surface. In Rattus norvegicus (Rat), this protein is DnaJ homolog subfamily C member 14 (Dnajc14).